The following is a 309-amino-acid chain: Methionyl-tRNA formyltransferase (309 aa).

110–113 serves as a coordination point for (6S)-5,6,7,8-tetrahydrofolate; sequence SLLP. Residues 289 to 309 form a disordered region; the sequence is KRMAATDWARGSRIEQGERLK. The segment covering 298-309 has biased composition (basic and acidic residues); the sequence is RGSRIEQGERLK.

This sequence belongs to the Fmt family.

The catalysed reaction is L-methionyl-tRNA(fMet) + (6R)-10-formyltetrahydrofolate = N-formyl-L-methionyl-tRNA(fMet) + (6S)-5,6,7,8-tetrahydrofolate + H(+). Attaches a formyl group to the free amino group of methionyl-tRNA(fMet). The formyl group appears to play a dual role in the initiator identity of N-formylmethionyl-tRNA by promoting its recognition by IF2 and preventing the misappropriation of this tRNA by the elongation apparatus. This is Methionyl-tRNA formyltransferase from Saccharopolyspora erythraea (strain ATCC 11635 / DSM 40517 / JCM 4748 / NBRC 13426 / NCIMB 8594 / NRRL 2338).